We begin with the raw amino-acid sequence, 398 residues long: Succinate--CoA ligase [ADP-forming] subunit beta (398 aa).

Positions 9–254 (KALLHEFGVP…ETEEDAKEIE (246 aa)) constitute an ATP-grasp domain. ATP-binding positions include Lys46, 53-55 (GRG), Glu109, Ser112, and Glu117. Residues Asn209 and Asp223 each contribute to the Mg(2+) site. Substrate contacts are provided by residues Asn274 and 331–333 (GIM).

This sequence belongs to the succinate/malate CoA ligase beta subunit family. Heterotetramer of two alpha and two beta subunits. Requires Mg(2+) as cofactor.

The catalysed reaction is succinate + ATP + CoA = succinyl-CoA + ADP + phosphate. It catalyses the reaction GTP + succinate + CoA = succinyl-CoA + GDP + phosphate. It functions in the pathway carbohydrate metabolism; tricarboxylic acid cycle; succinate from succinyl-CoA (ligase route): step 1/1. Functionally, succinyl-CoA synthetase functions in the citric acid cycle (TCA), coupling the hydrolysis of succinyl-CoA to the synthesis of either ATP or GTP and thus represents the only step of substrate-level phosphorylation in the TCA. The beta subunit provides nucleotide specificity of the enzyme and binds the substrate succinate, while the binding sites for coenzyme A and phosphate are found in the alpha subunit. The chain is Succinate--CoA ligase [ADP-forming] subunit beta from Bradyrhizobium sp. (strain ORS 278).